Reading from the N-terminus, the 344-residue chain is Holliday junction branch migration complex subunit RuvB (344 aa).

A compositionally biased stretch (basic and acidic residues) spans 1-25 (MTDSDPTLRPDRLPEDVQATDDRAL). The segment at 1–33 (MTDSDPTLRPDRLPEDVQATDDRALRPQSLDDF) is disordered. Residues 1 to 186 (MTDSDPTLRP…FGIPTRLNFY (186 aa)) form a large ATPase domain (RuvB-L) region. Residues leucine 25, arginine 26, glycine 67, lysine 70, threonine 71, threonine 72, 133-135 (EDF), arginine 176, tyrosine 186, and arginine 223 each bind ATP. Threonine 71 serves as a coordination point for Mg(2+). Residues 187-257 (TIAELDQIVA…IADSALTRLG (71 aa)) form a small ATPAse domain (RuvB-S) region. Residues 260–344 (DLGLDGADRR…PKRPDQGELI (85 aa)) form a head domain (RuvB-H) region. DNA-binding residues include arginine 296, arginine 315, and arginine 320.

This sequence belongs to the RuvB family. In terms of assembly, homohexamer. Forms an RuvA(8)-RuvB(12)-Holliday junction (HJ) complex. HJ DNA is sandwiched between 2 RuvA tetramers; dsDNA enters through RuvA and exits via RuvB. An RuvB hexamer assembles on each DNA strand where it exits the tetramer. Each RuvB hexamer is contacted by two RuvA subunits (via domain III) on 2 adjacent RuvB subunits; this complex drives branch migration. In the full resolvosome a probable DNA-RuvA(4)-RuvB(12)-RuvC(2) complex forms which resolves the HJ.

It is found in the cytoplasm. It carries out the reaction ATP + H2O = ADP + phosphate + H(+). The RuvA-RuvB-RuvC complex processes Holliday junction (HJ) DNA during genetic recombination and DNA repair, while the RuvA-RuvB complex plays an important role in the rescue of blocked DNA replication forks via replication fork reversal (RFR). RuvA specifically binds to HJ cruciform DNA, conferring on it an open structure. The RuvB hexamer acts as an ATP-dependent pump, pulling dsDNA into and through the RuvAB complex. RuvB forms 2 homohexamers on either side of HJ DNA bound by 1 or 2 RuvA tetramers; 4 subunits per hexamer contact DNA at a time. Coordinated motions by a converter formed by DNA-disengaged RuvB subunits stimulates ATP hydrolysis and nucleotide exchange. Immobilization of the converter enables RuvB to convert the ATP-contained energy into a lever motion, pulling 2 nucleotides of DNA out of the RuvA tetramer per ATP hydrolyzed, thus driving DNA branch migration. The RuvB motors rotate together with the DNA substrate, which together with the progressing nucleotide cycle form the mechanistic basis for DNA recombination by continuous HJ branch migration. Branch migration allows RuvC to scan DNA until it finds its consensus sequence, where it cleaves and resolves cruciform DNA. This Jannaschia sp. (strain CCS1) protein is Holliday junction branch migration complex subunit RuvB.